The chain runs to 440 residues: MFLAQEIIRKKRDGHPLTEEEIRFFINGVRDNTVSEGQIAALAMTIYFHDMTMPERVALTLAMRDSGTVLNWKSLNLNGPIVDKHSTGGVGDVTSLMLGPMVAACGGYVPMISGRGLGHTGGTLDKLEAIPGFDIFPDDEKFRDIIRHVGVAIIGQTNSLAPADKRFYATRDITATVDSIPLITASILGKKLAEGLDALVMDVKVGSGAFMPTYQKSEELAESIVQVANGAGCQTTALLTDMNEVLASSAGNAVEVREAVQFLTGEYRNPRLFEVTMALCVEMLVSGRLADSRQQARQKLQDVLDNGKAAEVFARMVAAQNGPTDFVENYNKYLPTAVLSKPVFAEKAGFVTEMDTRALGMSVVTLGGGRRKATDAIDYSVGLSEIAALGTEINTDTPLAMIHANSEKSWQEAAAEVRKAMVIGETKRETSPMVYRQVSE.

This sequence belongs to the thymidine/pyrimidine-nucleoside phosphorylase family. In terms of assembly, homodimer.

It catalyses the reaction thymidine + phosphate = 2-deoxy-alpha-D-ribose 1-phosphate + thymine. It participates in pyrimidine metabolism; dTMP biosynthesis via salvage pathway; dTMP from thymine: step 1/2. The enzymes which catalyze the reversible phosphorolysis of pyrimidine nucleosides are involved in the degradation of these compounds and in their utilization as carbon and energy sources, or in the rescue of pyrimidine bases for nucleotide synthesis. In Proteus mirabilis (strain HI4320), this protein is Thymidine phosphorylase.